The chain runs to 77 residues: SS18-like protein 2 (77 aa).

Residues 50-53 (YQHV) carry the SH2-binding motif.

Belongs to the SS18 family.

The polypeptide is SS18-like protein 2 (Ss18l2) (Mus musculus (Mouse)).